A 134-amino-acid polypeptide reads, in one-letter code: Probable glycine cleavage system H protein (134 aa).

The Lipoyl-binding domain maps to 29–110; the sequence is TVLVGITDYA…PYENWIAKLK (82 aa). Lys70 carries the post-translational modification N6-lipoyllysine.

It belongs to the GcvH family. The glycine cleavage system is composed of four proteins: P, T, L and H. The cofactor is (R)-lipoate.

The glycine cleavage system catalyzes the degradation of glycine. The H protein shuttles the methylamine group of glycine from the P protein to the T protein. The sequence is that of Probable glycine cleavage system H protein from Thermococcus gammatolerans (strain DSM 15229 / JCM 11827 / EJ3).